We begin with the raw amino-acid sequence, 196 residues long: Peroxynitrite isomerase (196 aa).

The segment at 1-29 is disordered; the sequence is MSDENPLQPPWLNAPPVDPYPYEESHDLR. Positions 7 to 19 are enriched in pro residues; it reads LQPPWLNAPPVDP. The GXWXGXG motif lies at 46-52; that stretch reads GVWRGRG. H186 contacts heme b.

This sequence belongs to the nitrobindin family. Homodimer. The cofactor is heme b.

The catalysed reaction is peroxynitrite = nitrate. Its pathway is nitrogen metabolism. Heme-binding protein able to scavenge peroxynitrite and to protect free L-tyrosine against peroxynitrite-mediated nitration, by acting as a peroxynitrite isomerase that converts peroxynitrite to nitrate. Therefore, this protein likely plays a role in peroxynitrite sensing and in the detoxification of reactive nitrogen and oxygen species (RNS and ROS, respectively). Is able to bind nitric oxide (NO) in vitro, but may act as a sensor of peroxynitrite levels in vivo. The chain is Peroxynitrite isomerase from Salinispora arenicola (strain CNS-205).